The primary structure comprises 433 residues: Enolase (433 aa).

Gln167 contributes to the (2R)-2-phosphoglycerate binding site. Catalysis depends on Glu209, which acts as the Proton donor. Residues Asp246, Glu291, and Asp318 each coordinate Mg(2+). Positions 343, 372, 373, and 394 each coordinate (2R)-2-phosphoglycerate. Catalysis depends on Lys343, which acts as the Proton acceptor.

Belongs to the enolase family. Component of the RNA degradosome, a multiprotein complex involved in RNA processing and mRNA degradation. Requires Mg(2+) as cofactor.

It localises to the cytoplasm. It is found in the secreted. Its subcellular location is the cell surface. The enzyme catalyses (2R)-2-phosphoglycerate = phosphoenolpyruvate + H2O. It functions in the pathway carbohydrate degradation; glycolysis; pyruvate from D-glyceraldehyde 3-phosphate: step 4/5. Catalyzes the reversible conversion of 2-phosphoglycerate (2-PG) into phosphoenolpyruvate (PEP). It is essential for the degradation of carbohydrates via glycolysis. The polypeptide is Enolase (Actinobacillus succinogenes (strain ATCC 55618 / DSM 22257 / CCUG 43843 / 130Z)).